We begin with the raw amino-acid sequence, 335 residues long: Proline racemase (335 aa).

Catalysis depends on Cys91, which acts as the Proton acceptor. Residue Cys255 is the Proton donor of the active site.

The protein belongs to the proline racemase family. Homodimer.

The enzyme catalyses L-proline = D-proline. Its function is as follows. Catalyzes the reversible interconversion of L- and D-proline. Plays an important role in the regulation of intra- and extracellular amino acid pools, allowing the bacterium to profit from host precursors and enzymatic pathways. Strong B-cell mitogen. The chain is Proline racemase from Clostridioides difficile (strain 630) (Peptoclostridium difficile).